The chain runs to 101 residues: Protein RnfH (101 aa).

It belongs to the UPF0125 (RnfH) family.

In Pseudomonas aeruginosa (strain LESB58), this protein is Protein RnfH.